Reading from the N-terminus, the 156-residue chain is Transcription elongation factor GreA 1 (156 aa).

Residues 43 to 74 (RSENAEYSSAKRDLGRLESRLRYLNKQLQYAQ) are a coiled coil.

The protein belongs to the GreA/GreB family.

In terms of biological role, necessary for efficient RNA polymerase transcription elongation past template-encoded arresting sites. The arresting sites in DNA have the property of trapping a certain fraction of elongating RNA polymerases that pass through, resulting in locked ternary complexes. Cleavage of the nascent transcript by cleavage factors such as GreA or GreB allows the resumption of elongation from the new 3'terminus. GreA releases sequences of 2 to 3 nucleotides. In Lactiplantibacillus plantarum (strain ATCC BAA-793 / NCIMB 8826 / WCFS1) (Lactobacillus plantarum), this protein is Transcription elongation factor GreA 1.